Reading from the N-terminus, the 272-residue chain is Prohibitin 1 (272 aa).

At A2 the chain carries N-acetylalanine. The residue at position 91 (T91) is a Phosphothreonine. An N6-acetyllysine mark is found at K128 and K186. The stretch at 177 to 211 (KEFTEAVEAKQVAQQEAERARFVVEKAEQQKKAAI) forms a coiled coil. K202 is subject to N6-acetyllysine; alternate. K202 is modified (N6-succinyllysine; alternate). Y249 carries the phosphotyrosine modification.

This sequence belongs to the prohibitin family. In terms of assembly, the mitochondrial prohibitin complex consists of two subunits (PHB1 and PHB2), assembled into a membrane-associated ring-shaped supercomplex of approximately 1 mDa. Interacts with STOML2. Interacts with MAP1LC3B (membrane-bound form LC3-II); the interaction requires PHB2 and takes place upon Parkin-mediated mitochondrial damage. Interacts with STAT3 (unphosphorylated or phosphorylated at 'Ser-727'). Interacts with CLPB. Interacts with CD86 (via cytoplasmic domain); the interactions increases after priming with CD40.

It localises to the mitochondrion inner membrane. The protein resides in the nucleus. The protein localises to the cytoplasm. It is found in the cell membrane. Functionally, protein with pleiotropic attributes mediated in a cell-compartment- and tissue-specific manner, which include the plasma membrane-associated cell signaling functions, mitochondrial chaperone, and transcriptional co-regulator of transcription factors in the nucleus. Plays a role in adipose tissue and glucose homeostasis in a sex-specific manner. Contributes to pulmonary vascular remodeling by accelerating proliferation of pulmonary arterial smooth muscle cells. In the mitochondria, together with PHB2, forms large ring complexes (prohibitin complexes) in the inner mitochondrial membrane (IMM) and functions as a chaperone protein that stabilizes mitochondrial respiratory enzymes and maintains mitochondrial integrity in the IMM, which is required for mitochondrial morphogenesis, neuronal survival, and normal lifespan. The prohibitin complex, with DNAJC19, regulates cardiolipin remodeling and the protein turnover of OMA1 in a cardiolipin-binding manner. Regulates mitochondrial respiration activity playing a role in cellular aging. The prohibitin complex plays a role of mitophagy receptor involved in targeting mitochondria for autophagic degradation. Involved in mitochondrial-mediated antiviral innate immunity, activates RIG-I-mediated signal transduction and production of IFNB1 and proinflammatory cytokine IL6. Its function is as follows. In the nucleus, acts as a transcription coregulator, enhances promoter binding by TP53, a transcription factor it activates, but reduces the promoter binding by E2F1, a transcription factor it represses. Interacts with STAT3 to affect IL17 secretion in T-helper Th17 cells. In terms of biological role, in the plasma membrane, cooperates with CD86 to mediate CD86-signaling in B lymphocytes that regulates the level of IgG1 produced through the activation of distal signaling intermediates. Upon CD40 engagement, required to activate NF-kappa-B signaling pathway via phospholipase C and protein kinase C activation. This Bos taurus (Bovine) protein is Prohibitin 1 (PHB1).